A 151-amino-acid polypeptide reads, in one-letter code: SsrA-binding protein (151 aa).

The segment at 132 to 151 is disordered; the sequence is KRQTIKKRDQDREIHRKYGI.

The protein belongs to the SmpB family.

The protein localises to the cytoplasm. Required for rescue of stalled ribosomes mediated by trans-translation. Binds to transfer-messenger RNA (tmRNA), required for stable association of tmRNA with ribosomes. tmRNA and SmpB together mimic tRNA shape, replacing the anticodon stem-loop with SmpB. tmRNA is encoded by the ssrA gene; the 2 termini fold to resemble tRNA(Ala) and it encodes a 'tag peptide', a short internal open reading frame. During trans-translation Ala-aminoacylated tmRNA acts like a tRNA, entering the A-site of stalled ribosomes, displacing the stalled mRNA. The ribosome then switches to translate the ORF on the tmRNA; the nascent peptide is terminated with the 'tag peptide' encoded by the tmRNA and targeted for degradation. The ribosome is freed to recommence translation, which seems to be the essential function of trans-translation. The chain is SsrA-binding protein from Lactobacillus gasseri (strain ATCC 33323 / DSM 20243 / BCRC 14619 / CIP 102991 / JCM 1131 / KCTC 3163 / NCIMB 11718 / NCTC 13722 / AM63).